Reading from the N-terminus, the 294-residue chain is MSNQDLLYRYLFEEYEVRGELVQLDHTYRHVVEAQSYPVQVQKLLGELLVATSLLTATLKFEGSITVQLQGDGPVRLAVINGDNNQQLRGVARYEGELPSDGKLQSLIGNGQLIITITPEQGERYQGIIALDADTLAGCLEHYFAQSEQLATKLWIRTGYHQGEPRAAGILLQALPAQSEDHSADFDHLTQLTATIKDEELFGLEAEEILYRLYHQDKVRVFDPQAVEFRCTCSRARCEGALLQIEKEEVLDMVQELGKIDMHCDYCGAQYQFDGIDVETLFSRAPDNDANKLH.

Intrachain disulfides connect Cys-231-Cys-233 and Cys-264-Cys-267.

Belongs to the HSP33 family. Post-translationally, under oxidizing conditions two disulfide bonds are formed involving the reactive cysteines. Under reducing conditions zinc is bound to the reactive cysteines and the protein is inactive.

The protein localises to the cytoplasm. In terms of biological role, redox regulated molecular chaperone. Protects both thermally unfolding and oxidatively damaged proteins from irreversible aggregation. Plays an important role in the bacterial defense system toward oxidative stress. The chain is 33 kDa chaperonin from Aeromonas salmonicida (strain A449).